Reading from the N-terminus, the 228-residue chain is L-ribulose-5-phosphate 4-epimerase UlaF (228 aa).

Substrate is bound by residues 26–27 (GN), 43–44 (SG), and 72–73 (SS). 3 residues coordinate Zn(2+): Asp-74, His-93, and His-95. Residue Asp-118 is the Proton donor/acceptor of the active site. Position 167 (His-167) interacts with Zn(2+). The active-site Proton donor/acceptor is the Tyr-225.

This sequence belongs to the aldolase class II family. AraD/FucA subfamily. The cofactor is Zn(2+).

It carries out the reaction L-ribulose 5-phosphate = D-xylulose 5-phosphate. It functions in the pathway cofactor degradation; L-ascorbate degradation; D-xylulose 5-phosphate from L-ascorbate: step 4/4. Functionally, catalyzes the isomerization of L-ribulose 5-phosphate to D-xylulose 5-phosphate. Is involved in the anaerobic L-ascorbate utilization. This Escherichia coli (strain SMS-3-5 / SECEC) protein is L-ribulose-5-phosphate 4-epimerase UlaF.